The primary structure comprises 255 residues: Zinc finger CCCH domain-containing protein 37 (255 aa).

2 C3H1-type zinc fingers span residues 98-128 (AYTGEPCPDFRRRPGAACPRGSTCPFAHGTF) and 137-159 (YRTRPCRAGVACRRRVCFFAHTA).

The chain is Zinc finger CCCH domain-containing protein 37 from Oryza sativa subsp. japonica (Rice).